Reading from the N-terminus, the 361-residue chain is DNA replication and repair protein RecF (361 aa).

30–37 (GPNGSGKT) provides a ligand contact to ATP.

The protein belongs to the RecF family.

The protein localises to the cytoplasm. In terms of biological role, the RecF protein is involved in DNA metabolism; it is required for DNA replication and normal SOS inducibility. RecF binds preferentially to single-stranded, linear DNA. It also seems to bind ATP. In Yersinia enterocolitica serotype O:8 / biotype 1B (strain NCTC 13174 / 8081), this protein is DNA replication and repair protein RecF.